The chain runs to 97 residues: Mitochondrial import inner membrane translocase subunit Tim8 A (97 aa).

The Twin CX3C motif motif lies at 43 to 66; the sequence is CWEKCMDKPGPKLDSRAEACFVNC. Cystine bridges form between cysteine 43–cysteine 66 and cysteine 47–cysteine 62. Residues serine 57, serine 87, serine 94, and serine 96 each carry the phosphoserine modification.

It belongs to the small Tim family. In terms of assembly, heterohexamer; composed of 3 copies of TIMM8A and 3 copies of TIMM13, named soluble 70 kDa complex. Associates with the TIM22 complex, whose core is composed of TIMM22.

It is found in the mitochondrion inner membrane. In terms of biological role, mitochondrial intermembrane chaperone that participates in the import and insertion of some multi-pass transmembrane proteins into the mitochondrial inner membrane. Also required for the transfer of beta-barrel precursors from the TOM complex to the sorting and assembly machinery (SAM complex) of the outer membrane. Acts as a chaperone-like protein that protects the hydrophobic precursors from aggregation and guide them through the mitochondrial intermembrane space. The TIMM8-TIMM13 complex mediates the import of proteins such as TIMM23, SLC25A12/ARALAR1 and SLC25A13/ARALAR2, while the predominant TIMM9-TIMM10 70 kDa complex mediates the import of much more proteins. The sequence is that of Mitochondrial import inner membrane translocase subunit Tim8 A (Timm8a) from Rattus norvegicus (Rat).